The primary structure comprises 239 residues: Outer membrane protein PagN (239 aa).

A signal peptide spans 1–22; sequence MKNFFAVCIIPLVVAWSATASA. Residues 23 to 26 lie on the Periplasmic side of the membrane; sequence KEGI. The beta stranded transmembrane segment at 27–36 threads the bilayer; sequence YITGKAGTSV. The Extracellular segment spans residues 37–65; it reads VNVYGINSTFSQDEIVNGHATLPDRTKGV. Residues 66–76 traverse the membrane as a beta stranded segment; that stretch reads FGGGVAIGYDF. The Periplasmic portion of the chain corresponds to 77–81; sequence YDPFQ. A beta stranded transmembrane segment spans residues 82-92; the sequence is LPVRLELDTTF. Topologically, residues 93–120 are extracellular; it reads RGETDAKGGQDIIAFGDPVHINVKNQVR. A beta stranded transmembrane segment spans residues 121–132; the sequence is MTTYMVNGYYDF. The Periplasmic segment spans residues 133–137; that stretch reads HNSTA. The chain crosses the membrane as a beta stranded span at residues 138 to 148; it reads FTPYISAGVGL. Topologically, residues 149 to 174 are extracellular; sequence AHVKLSNNTIPVGFGINETLSASKNN. A beta stranded transmembrane segment spans residues 175–185; it reads FAWGAGIGAKY. Residues 186–190 are Periplasmic-facing; sequence AVTDN. The beta stranded transmembrane segment at 191-200 threads the bilayer; sequence IMIDASYKYI. Over 201–230 the chain is Extracellular; sequence NAGKVSISKNHYAGDEHTAYDADTKAASND. The chain crosses the membrane as a beta stranded span at residues 231–239; the sequence is FMLGITYAF.

The protein resides in the cell outer membrane. Functionally, haemagglutinin that facilitates the adhesion to and invasion of epithelial mammalian cells. Utilizes heparinated proteoglycan as a receptor to successfully invade host cells. The polypeptide is Outer membrane protein PagN (pagN) (Salmonella typhimurium (strain LT2 / SGSC1412 / ATCC 700720)).